The following is a 454-amino-acid chain: Epsin-1 (454 aa).

An ENTH domain is found at 11–143 (NLVKGYSSTQ…SDDERLNEER (133 aa)). Disordered regions lie at residues 142–195 (ERNM…EDYE) and 292–350 (YLAS…GNQS). Positions 149-160 (GRNRKGRRRRGT) are enriched in basic residues. Thr-160 is subject to Phosphothreonine. At Ser-163 the chain carries Phosphoserine. 2 consecutive UIM domains span residues 165-184 (ENDD…AEED) and 189-208 (KQDE…EELK). Residue Thr-180 is modified to Phosphothreonine. The segment covering 180–191 (TAEEDERRRKQD) has biased composition (basic and acidic residues). Positions 292 to 302 (YLASMQQQQQA) are enriched in low complexity. 2 stretches are compositionally biased toward polar residues: residues 303–329 (MSNN…ASSP) and 340–350 (PLIQNRTGNQS). A Phosphoserine modification is found at Ser-328. Lys-357 participates in a covalent cross-link: Glycyl lysine isopeptide (Lys-Gly) (interchain with G-Cter in ubiquitin). 5 positions are modified to phosphothreonine: Thr-364, Thr-366, Thr-384, Thr-386, and Thr-388. Residues 384–398 (TKTGTFINSQGTGYR) are compositionally biased toward polar residues. A disordered region spans residues 384-405 (TKTGTFINSQGTGYRQVSDDPN). Phosphothreonine; by PRK1 is present on residues Thr-395 and Thr-415. Polar residues predominate over residues 418–428 (PSTSVVPTQTG). The interval 418-454 (PSTSVVPTQTGYGFGNQSQQQSQNNGSNNRGYTLIDL) is disordered. Over residues 432–446 (GNQSQQQSQNNGSNN) the composition is skewed to low complexity. A clathrin-binding region spans residues 447–454 (RGYTLIDL).

The protein belongs to the epsin family. Interacts with EDE1 and PAN1.

The protein resides in the cytoplasm. The protein localises to the membrane. In terms of biological role, binds to membranes enriched in phosphatidylinositol 3,5-bisphosphate (PtdIns(3,5)P2) and phosphatidylinositol 4,5-bisphosphate (PtdIns(4,5)P2). Required for endocytosis and localization of actin. Negatively regulated via phosphorylation. This is Epsin-1 (ENT1) from Saccharomyces cerevisiae (strain ATCC 204508 / S288c) (Baker's yeast).